A 602-amino-acid polypeptide reads, in one-letter code: Elongation factor 4 (602 aa).

Residues 7 to 189 (SKIRNFCIIA…AIVRRVPPPQ (183 aa)) form the tr-type G domain. GTP-binding positions include 19–24 (DHGKST) and 136–139 (NKVD).

It belongs to the TRAFAC class translation factor GTPase superfamily. Classic translation factor GTPase family. LepA subfamily.

Its subcellular location is the cell inner membrane. The enzyme catalyses GTP + H2O = GDP + phosphate + H(+). Its function is as follows. Required for accurate and efficient protein synthesis under certain stress conditions. May act as a fidelity factor of the translation reaction, by catalyzing a one-codon backward translocation of tRNAs on improperly translocated ribosomes. Back-translocation proceeds from a post-translocation (POST) complex to a pre-translocation (PRE) complex, thus giving elongation factor G a second chance to translocate the tRNAs correctly. Binds to ribosomes in a GTP-dependent manner. In Prochlorococcus marinus (strain MIT 9301), this protein is Elongation factor 4.